The chain runs to 508 residues: Histidine ammonia-lyase (508 aa).

Positions 145-147 (ASG) form a cross-link, 5-imidazolinone (Ala-Gly). Ser-146 bears the 2,3-didehydroalanine (Ser) mark.

Belongs to the PAL/histidase family. In terms of processing, contains an active site 4-methylidene-imidazol-5-one (MIO), which is formed autocatalytically by cyclization and dehydration of residues Ala-Ser-Gly.

It is found in the cytoplasm. It catalyses the reaction L-histidine = trans-urocanate + NH4(+). It participates in amino-acid degradation; L-histidine degradation into L-glutamate; N-formimidoyl-L-glutamate from L-histidine: step 1/3. The chain is Histidine ammonia-lyase from Myxococcus xanthus (strain DK1622).